The following is a 118-amino-acid chain: uncharacterized protein (118 aa).

Positions 98–118 (KGKGNEGREEAEEPLEEPEEG) are disordered. Over residues 106–118 (EEAEEPLEEPEEG) the composition is skewed to acidic residues.

Belongs to the UPF0440 family.

This is an uncharacterized protein from Pyrococcus abyssi (strain GE5 / Orsay).